Here is a 275-residue protein sequence, read N- to C-terminus: Myb/SANT-like DNA-binding domain-containing protein 3 (275 aa).

The 66-residue stretch at 13–78 folds into the Myb-like domain; it reads FSELEKSILL…QLKKCWENIK (66 aa). Serine 96 and serine 98 each carry phosphoserine. Lysine 154 is covalently cross-linked (Glycyl lysine isopeptide (Lys-Gly) (interchain with G-Cter in SUMO2)). A coiled-coil region spans residues 211–247; that stretch reads QLIQMNEVHVAKIQQIERECEMAEEEHRIKMEVLNKK. Serine 274 carries the phosphoserine modification.

Belongs to the MSANTD3 family.

The polypeptide is Myb/SANT-like DNA-binding domain-containing protein 3 (MSANTD3) (Bos taurus (Bovine)).